A 182-amino-acid polypeptide reads, in one-letter code: Malignant T-cell-amplified sequence 1 homolog (182 aa).

The region spanning 93-172 (VTMQQVDKGA…IGIETYHFLN (80 aa)) is the PUA domain.

This sequence belongs to the MCTS1 family. As to quaternary structure, interacts with DENR.

The protein localises to the cytoplasm. In terms of biological role, regulates translation as part of a complex with DENR. Specifically required for translational re-initiation in mRNAs containing upstream open reading frames (uORFs). Not required for standard translational initiation. Regulates expression of a subset of gene products including mbc, InR and EcR. The sequence is that of Malignant T-cell-amplified sequence 1 homolog from Drosophila melanogaster (Fruit fly).